Reading from the N-terminus, the 221-residue chain is Small ribosomal subunit protein uS3 (221 aa).

Positions Ile-39–Lys-108 constitute a KH type-2 domain.

The protein belongs to the universal ribosomal protein uS3 family. As to quaternary structure, part of the 30S ribosomal subunit. Forms a tight complex with proteins S10 and S14.

Its function is as follows. Binds the lower part of the 30S subunit head. Binds mRNA in the 70S ribosome, positioning it for translation. The sequence is that of Small ribosomal subunit protein uS3 from Clostridium beijerinckii (strain ATCC 51743 / NCIMB 8052) (Clostridium acetobutylicum).